The chain runs to 63 residues: Sperm protamine P1 (63 aa).

Residues 1 to 63 form a disordered region; the sequence is MARYRRHSRS…RYSRRGRRRY (63 aa).

This sequence belongs to the protamine P1 family. In terms of tissue distribution, testis.

It localises to the nucleus. Its subcellular location is the chromosome. Its function is as follows. Protamines substitute for histones in the chromatin of sperm during the haploid phase of spermatogenesis. They compact sperm DNA into a highly condensed, stable and inactive complex. The sequence is that of Sperm protamine P1 (PRM1) from Sminthopsis bindi (Kakadu dunnart).